Here is a 308-residue protein sequence, read N- to C-terminus: Putative lipid kinase SH2167 (308 aa).

The 139-residue stretch at 1 to 139 (MGQKFNHGVL…YDVMKVNGTY (139 aa)) folds into the DAGKc domain. Residues serine 44, 74 to 80 (GDGTVNE), and threonine 101 each bind ATP. Mg(2+)-binding residues include serine 220, aspartate 223, and lysine 225. The Proton acceptor role is filled by glutamate 281.

Belongs to the diacylglycerol/lipid kinase family. Mg(2+) serves as cofactor.

May catalyze the ATP-dependent phosphorylation of lipids other than diacylglycerol (DAG). The polypeptide is Putative lipid kinase SH2167 (Staphylococcus haemolyticus (strain JCSC1435)).